We begin with the raw amino-acid sequence, 216 residues long: Large ribosomal subunit protein uL3 (216 aa).

Residues 137–158 form a disordered region; that stretch reads GASHGAHKNHRKPGSIGGASTP.

Belongs to the universal ribosomal protein uL3 family. Part of the 50S ribosomal subunit. Forms a cluster with proteins L14 and L19.

One of the primary rRNA binding proteins, it binds directly near the 3'-end of the 23S rRNA, where it nucleates assembly of the 50S subunit. The polypeptide is Large ribosomal subunit protein uL3 (Pseudarthrobacter chlorophenolicus (strain ATCC 700700 / DSM 12829 / CIP 107037 / JCM 12360 / KCTC 9906 / NCIMB 13794 / A6) (Arthrobacter chlorophenolicus)).